The chain runs to 278 residues: Mediator of RNA polymerase II transcription subunit 18 (278 aa).

Belongs to the Mediator complex subunit 18 family. In terms of assembly, component of the Mediator complex.

It is found in the nucleus. Its function is as follows. Component of the Mediator complex, a coactivator involved in the regulated transcription of nearly all RNA polymerase II-dependent genes. Mediator functions as a bridge to convey information from gene-specific regulatory proteins to the basal RNA polymerase II transcription machinery. Mediator is recruited to promoters by direct interactions with regulatory proteins and serves as a scaffold for the assembly of a functional preinitiation complex with RNA polymerase II and the general transcription factors. The chain is Mediator of RNA polymerase II transcription subunit 18 (srb5) from Aspergillus clavatus (strain ATCC 1007 / CBS 513.65 / DSM 816 / NCTC 3887 / NRRL 1 / QM 1276 / 107).